The chain runs to 342 residues: Acetoin:2,6-dichlorophenolindophenol oxidoreductase subunit beta (342 aa).

In terms of assembly, tetramer of 2 alpha and 2 beta subunits.

The protein operates within ketone degradation; acetoin degradation. Functionally, catalyzes the 2,6-dichlorophenolindophenol-dependent cleavage of acetoin into acetate and acetaldehyde. This chain is Acetoin:2,6-dichlorophenolindophenol oxidoreductase subunit beta (acoB), found in Bacillus subtilis (strain 168).